Reading from the N-terminus, the 455-residue chain is Gametocyte surface protein P45/48 (455 aa).

The signal sequence occupies residues 1–30 (MLYFFGNSRFFLFFFYFFFYFVLVIKSSVG). Residues 48–186 (LGYKCDFSTE…ALVHVTVLKY (139 aa)) form the 6-Cys 1 domain. 2 disulfide bridges follow: cysteine 52/cysteine 74 and cysteine 106/cysteine 160. Residues asparagine 135, asparagine 194, asparagine 275, and asparagine 307 are each glycosylated (N-linked (GlcNAc...) asparagine). Positions 302-433 (VIYGCNFSKD…ITGFMNIKIG (132 aa)) constitute a 6-Cys 2 domain. 3 disulfide bridges follow: cysteine 306–cysteine 334, cysteine 351–cysteine 419, and cysteine 359–cysteine 417. A lipid anchor (GPI-anchor amidated glycine) is attached at glycine 433. The propeptide at 434 to 455 (SAYYAFLSKLFIIFIPLFFMWL) is removed in mature form.

In terms of assembly, heterodimer; heterodimerizes with PF230.

It is found in the cell surface. The protein localises to the cell membrane. Its function is as follows. Gametocyte surface protein required for male fertility. This chain is Gametocyte surface protein P45/48 (PB45/48), found in Plasmodium berghei (strain Anka).